Reading from the N-terminus, the 150-residue chain is Ribonuclease H (150 aa).

The RNase H type-1 domain maps to 7–148 (ERPRVEIWTD…VDQLATRGRE (142 aa)). Positions 16, 54, 76, and 140 each coordinate Mg(2+).

It belongs to the RNase H family. As to quaternary structure, monomer. Mg(2+) serves as cofactor.

The protein localises to the cytoplasm. It catalyses the reaction Endonucleolytic cleavage to 5'-phosphomonoester.. Endonuclease that specifically degrades the RNA of RNA-DNA hybrids. The chain is Ribonuclease H from Gluconobacter oxydans (strain 621H) (Gluconobacter suboxydans).